Here is a 429-residue protein sequence, read N- to C-terminus: Antho-RFamide neuropeptides type 2 (429 aa).

The N-terminal stretch at M1 to A22 is a signal peptide. Positions K23 to D233 are excised as a propeptide. Basic and acidic residues predominate over residues G230–R371. Residues G230 to S429 form a disordered region. Q234 carries the post-translational modification Pyrrolidone carboxylic acid. F237 is subject to Phenylalanine amide. Residues R239–D241 constitute a propeptide that is removed on maturation. At Q242 the chain carries Pyrrolidone carboxylic acid. F245 is subject to Phenylalanine amide. A propeptide spanning residues R247–D249 is cleaved from the precursor. Q250 carries the pyrrolidone carboxylic acid modification. The residue at position 253 (F253) is a Phenylalanine amide. A propeptide spanning residues R255–D257 is cleaved from the precursor. Q258 carries the post-translational modification Pyrrolidone carboxylic acid. Phenylalanine amide is present on F261. Residues R263–D265 constitute a propeptide that is removed on maturation. Pyrrolidone carboxylic acid is present on Q266. Position 269 is a phenylalanine amide (F269). Positions R271 to D273 are excised as a propeptide. Pyrrolidone carboxylic acid is present on Q274. F277 is subject to Phenylalanine amide. A propeptide spanning residues R279–D289 is cleaved from the precursor. Residue Q290 is modified to Pyrrolidone carboxylic acid. Residue F293 is modified to Phenylalanine amide. The propeptide occupies R295–D297. Q298 is subject to Pyrrolidone carboxylic acid. A Phenylalanine amide modification is found at F301. The propeptide occupies R303 to D305. Residue Q306 is modified to Pyrrolidone carboxylic acid. F309 bears the Phenylalanine amide mark. The propeptide occupies R311 to D321. Residue Q322 is modified to Pyrrolidone carboxylic acid. Residue F325 is modified to Phenylalanine amide. Residues R327–D329 constitute a propeptide that is removed on maturation. Pyrrolidone carboxylic acid is present on Q330. Phenylalanine amide is present on F333. Positions R335 to D342 are excised as a propeptide. Q343 is subject to Pyrrolidone carboxylic acid. F346 bears the Phenylalanine amide mark. The propeptide occupies R348–D355. Q356 carries the pyrrolidone carboxylic acid modification. At F359 the chain carries Phenylalanine amide. Positions R361–D368 are excised as a propeptide. Q369 carries the post-translational modification Pyrrolidone carboxylic acid. F372 carries the post-translational modification Phenylalanine amide. The propeptide occupies R374–S429. Basic and acidic residues predominate over residues S392–S429.

It belongs to the FARP (FMRFamide related peptide) family.

It localises to the secreted. Its function is as follows. Not known but it could act as a transmitter at neuromuscular synapses. This is Antho-RFamide neuropeptides type 2 from Anthopleura elegantissima (Green aggregating anemone).